A 215-amino-acid chain; its full sequence is Pyrrolidone-carboxylate peptidase (215 aa).

Catalysis depends on residues glutamate 81, cysteine 144, and histidine 168.

The protein belongs to the peptidase C15 family. As to quaternary structure, homotetramer.

It localises to the cytoplasm. The catalysed reaction is Release of an N-terminal pyroglutamyl group from a polypeptide, the second amino acid generally not being Pro.. Functionally, removes 5-oxoproline from various penultimate amino acid residues except L-proline. In Bacillus licheniformis (strain ATCC 14580 / DSM 13 / JCM 2505 / CCUG 7422 / NBRC 12200 / NCIMB 9375 / NCTC 10341 / NRRL NRS-1264 / Gibson 46), this protein is Pyrrolidone-carboxylate peptidase.